The following is a 312-amino-acid chain: Nicotinamide adenine dinucleotide transporter 1, chloroplastic (312 aa).

3 Solcar repeats span residues 11 to 103 (KNVL…LKSF), 111 to 199 (LSVG…IKVY), and 211 to 299 (LNAR…VHRF). 6 helical membrane-spanning segments follow: residues 17–37 (AAAG…LDVI), 78–98 (GLSP…TMYD), 117–137 (VLAA…LWVV), 171–191 (GLYS…IQFP), 216–232 (VAVA…TLTY), and 271–293 (FYRG…FTSF).

Belongs to the mitochondrial carrier (TC 2.A.29) family. As to expression, highly expressed in young leaf mesophyll cells, root tips and at the branches of adventitious roots. Low expression in all flower tissues and not detected in siliques and seeds.

The protein resides in the plastid. The protein localises to the chloroplast membrane. Its activity is regulated as follows. Inhibited by pyridoxal 5'-phosphate, bathophenanthroline, tannic acid, mersalyl, mercuric chloride, p-hydroxymercuribenzoate, p-hydroxymercuribenzoate sulfonate, bromocresol purple and N-ethylmaleimide. In terms of biological role, mediates the NAD(+) import into chloroplast. Favors the NAD(+)(in)/ADP or AMP(out) antiport exchange, but is also able to catalyze a low unidirectional transport (uniport) of NAD(+). Transports NAD(+), nicotinic acid adenine dinucleotide, nicotinamide mononucleotide, nicotinic acid mononucleotide, FAD, FMN, TTP, TDP, TMP, UTP, UDP, UMP, CTP, CDP, CMP, GTP, GDP, GMP, 3'-AMP, ATP, ADP, and AMP, has low transport activity with cAMP, pyrophosphate, NADH and alpha-NAD(+), and has no activity with NADP(+), NADPH, nicotinamide, nicotinic acid, adenosine, thiamine mono- or diphosphate, inorganic phosphate, CoA, folate, NaCl, malate, malonate, citrate, fumarate, aspartate, glutamate, S-adenosylmethionine, lysine, arginine, and ornithine. The polypeptide is Nicotinamide adenine dinucleotide transporter 1, chloroplastic (NDT1) (Arabidopsis thaliana (Mouse-ear cress)).